The following is a 218-amino-acid chain: Uracil-DNA glycosylase (218 aa).

Residue D60 is the Proton acceptor of the active site.

It belongs to the uracil-DNA glycosylase (UDG) superfamily. UNG family.

It localises to the cytoplasm. It catalyses the reaction Hydrolyzes single-stranded DNA or mismatched double-stranded DNA and polynucleotides, releasing free uracil.. Its function is as follows. Excises uracil residues from the DNA which can arise as a result of misincorporation of dUMP residues by DNA polymerase or due to deamination of cytosine. The polypeptide is Uracil-DNA glycosylase (Francisella philomiragia subsp. philomiragia (strain ATCC 25017 / CCUG 19701 / FSC 153 / O#319-036)).